The following is a 229-amino-acid chain: Non-structural protein V (229 aa).

Composition is skewed to polar residues over residues 30-46 and 82-112; these read ATSQ…SSRT and GRQN…LPSP. A disordered region spans residues 30 to 112; that stretch reads ATSQSSLNKP…MGSDTQLPSP (83 aa). Histidine 178, cysteine 197, cysteine 201, cysteine 213, cysteine 215, cysteine 218, cysteine 222, and cysteine 225 together coordinate Zn(2+).

Belongs to the paramyxoviruses V protein family.

Blocks host interferon signaling. In Homo sapiens (Human), this protein is Non-structural protein V (P/V).